Reading from the N-terminus, the 856-residue chain is Villin-like protein (856 aa).

6 Gelsolin-like repeats span residues 22-74, 146-186, 263-307, 401-450, 521-561, and 624-665; these read RKMV…EAQG, VSAT…SEKA, LVVL…QERK, LHRQ…DEIE, TRTM…DQRE, and LVLA…WKEA. The disordered stretch occupies residues 762-796; that stretch reads SQDSSENDLVRSPKSAGSRTSSSVSSTSATINGGL. The span at 776–791 shows a compositional bias: low complexity; the sequence is SAGSRTSSSVSSTSAT. The 67-residue stretch at 790–856 folds into the HP domain; that stretch reads ATINGGLRRE…RQEKKQLGFF (67 aa).

This sequence belongs to the villin/gelsolin family. In terms of tissue distribution, ubiquitously expressed in 16 tissues examined.

Its function is as follows. Possible tumor suppressor. This is Villin-like protein (VILL) from Homo sapiens (Human).